We begin with the raw amino-acid sequence, 815 residues long: Lon protease 2 (815 aa).

Residues 19 to 212 enclose the Lon N-terminal domain; it reads LPVLPLINTV…RLSVVLSQEI (194 aa). 365–372 contacts ATP; sequence GPPGVGKT. The Lon proteolytic domain maps to 601–782; the sequence is RDEIGVATGM…DEVLPIAFVS (182 aa). Catalysis depends on residues S688 and K731.

This sequence belongs to the peptidase S16 family. Homohexamer. Organized in a ring with a central cavity.

The protein localises to the cytoplasm. The enzyme catalyses Hydrolysis of proteins in presence of ATP.. Functionally, ATP-dependent serine protease that mediates the selective degradation of mutant and abnormal proteins as well as certain short-lived regulatory proteins. Required for cellular homeostasis and for survival from DNA damage and developmental changes induced by stress. Degrades polypeptides processively to yield small peptide fragments that are 5 to 10 amino acids long. Binds to DNA in a double-stranded, site-specific manner. This Herpetosiphon aurantiacus (strain ATCC 23779 / DSM 785 / 114-95) protein is Lon protease 2.